Reading from the N-terminus, the 415-residue chain is Gamma-glutamyl phosphate reductase (415 aa).

This sequence belongs to the gamma-glutamyl phosphate reductase family.

The protein resides in the cytoplasm. The enzyme catalyses L-glutamate 5-semialdehyde + phosphate + NADP(+) = L-glutamyl 5-phosphate + NADPH + H(+). It participates in amino-acid biosynthesis; L-proline biosynthesis; L-glutamate 5-semialdehyde from L-glutamate: step 2/2. Its function is as follows. Catalyzes the NADPH-dependent reduction of L-glutamate 5-phosphate into L-glutamate 5-semialdehyde and phosphate. The product spontaneously undergoes cyclization to form 1-pyrroline-5-carboxylate. The polypeptide is Gamma-glutamyl phosphate reductase (Mycobacterium bovis (strain BCG / Pasteur 1173P2)).